Reading from the N-terminus, the 153-residue chain is Ribosome maturation factor RimP (153 aa).

The protein belongs to the RimP family.

The protein resides in the cytoplasm. In terms of biological role, required for maturation of 30S ribosomal subunits. This Glaesserella parasuis serovar 5 (strain SH0165) (Haemophilus parasuis) protein is Ribosome maturation factor RimP.